We begin with the raw amino-acid sequence, 525 residues long: Asparagine synthetase [glutamine-hydrolyzing] (525 aa).

Catalysis depends on Cys2, which acts as the For GATase activity. A Glutamine amidotransferase type-2 domain is found at 2–185; it reads CGILAVLGCS…PGHLYSSKEG (184 aa). L-glutamine-binding positions include 50 to 54, 75 to 77, and Asp98; these read RLAII and NGE. Positions 193–517 constitute an Asparagine synthetase domain; sequence PPWFSEVIPS…QIDSPWRSKC (325 aa). ATP-binding positions include Leu231, Val267, and 341-342; that span reads SG.

The catalysed reaction is L-aspartate + L-glutamine + ATP + H2O = L-asparagine + L-glutamate + AMP + diphosphate + H(+). Its pathway is amino-acid biosynthesis; L-asparagine biosynthesis; L-asparagine from L-aspartate (L-Gln route): step 1/1. In terms of biological role, could play a role in remobilization of nitrogen in flowers during senescence. The sequence is that of Asparagine synthetase [glutamine-hydrolyzing] (AND1) from Sandersonia aurantiaca (Christmas-bells).